A 252-amino-acid chain; its full sequence is MGGQGKAINRKRKFVGRKADDPEFDLDKKQFKVLHLNATEKRLIIVLEGAQLETVKVHNTFELLNCDDHAGIMRKNQRDPGSCRPDITHQCLLMLFDSPLNRAGLLQVFVRTEHNVLIEINPQTRIPRTFKRFAGLMVQLLHKFQIRANDSSRRLMSVIKNPITDHVPVGCKKYAMSFSGKLLPNCRDLVPHGDETSASYDEPVVIVIGAFAHGVLKTDYTEELFSISNYPLSAAIACSKICSAFEEVWGVV.

S-adenosyl-L-methionine is bound by residues methionine 176, glycine 209, glycine 214, and 227–232 (ISNYPL).

It belongs to the class IV-like SAM-binding methyltransferase superfamily. RNA methyltransferase NEP1 family. In terms of assembly, homodimer. Part of the small subunit (SSU) processome, composed of more than 70 proteins and the RNA chaperone small nucleolar RNA (snoRNA) U3.

It is found in the nucleus. It localises to the nucleolus. It carries out the reaction a pseudouridine in rRNA + S-adenosyl-L-methionine = an N(1)-methylpseudouridine in rRNA + S-adenosyl-L-homocysteine + H(+). S-adenosyl-L-methionine-dependent pseudouridine N(1)-methyltransferase that methylates a pseudouridine in 18S rRNA. Involved the biosynthesis of the hypermodified N1-methyl-N3-(3-amino-3-carboxypropyl) pseudouridine (m1acp3-Psi) conserved in eukaryotic 18S rRNA. Also has an essential role in 40S ribosomal subunit biogenesis independent on its methyltransferase activity, facilitating the incorporation of ribosomal protein S19 during the formation of pre-ribosomes. Functionally, S-adenosyl-L-methionine-dependent pseudouridine N(1)-methyltransferase that methylates pseudouridine at position in 18S rRNA. Involved the biosynthesis of the hypermodified N1-methyl-N3-(3-amino-3-carboxypropyl) pseudouridine (m1acp3-Psi) conserved in eukaryotic 18S rRNA. Is not able to methylate uridine at this position. Also has an essential role in 40S ribosomal subunit biogenesis independent on its methyltransferase activity, facilitating the incorporation of ribosomal protein S19 during the formation of pre-ribosomes. Part of the small subunit (SSU) processome, first precursor of the small eukaryotic ribosomal subunit. During the assembly of the SSU processome in the nucleolus, many ribosome biogenesis factors, an RNA chaperone and ribosomal proteins associate with the nascent pre-rRNA and work in concert to generate RNA folding, modifications, rearrangements and cleavage as well as targeted degradation of pre-ribosomal RNA by the RNA exosome. The chain is Ribosomal RNA small subunit methyltransferase NEP1 from Drosophila melanogaster (Fruit fly).